Reading from the N-terminus, the 478-residue chain is UDP-glycosyltransferase 90A1 (478 aa).

UDP-alpha-D-glucose contacts are provided by residues T289, 343-345, 360-368, and 382-385; these read VDQ, HCGWNSAQE, and MAEQ.

The protein belongs to the UDP-glycosyltransferase family.

The polypeptide is UDP-glycosyltransferase 90A1 (UGT90A1) (Arabidopsis thaliana (Mouse-ear cress)).